Reading from the N-terminus, the 417-residue chain is Serine hydroxymethyltransferase 2 (417 aa).

(6S)-5,6,7,8-tetrahydrofolate contacts are provided by residues L121 and 125–127 (GHL). K230 carries the post-translational modification N6-(pyridoxal phosphate)lysine. 355 to 357 (SPF) provides a ligand contact to (6S)-5,6,7,8-tetrahydrofolate.

This sequence belongs to the SHMT family. As to quaternary structure, homodimer. Pyridoxal 5'-phosphate is required as a cofactor.

It is found in the cytoplasm. It carries out the reaction (6R)-5,10-methylene-5,6,7,8-tetrahydrofolate + glycine + H2O = (6S)-5,6,7,8-tetrahydrofolate + L-serine. Its pathway is one-carbon metabolism; tetrahydrofolate interconversion. The protein operates within amino-acid biosynthesis; glycine biosynthesis; glycine from L-serine: step 1/1. In terms of biological role, catalyzes the reversible interconversion of serine and glycine with tetrahydrofolate (THF) serving as the one-carbon carrier. This reaction serves as the major source of one-carbon groups required for the biosynthesis of purines, thymidylate, methionine, and other important biomolecules. Also exhibits THF-independent aldolase activity toward beta-hydroxyamino acids, producing glycine and aldehydes, via a retro-aldol mechanism. The chain is Serine hydroxymethyltransferase 2 from Pseudomonas syringae pv. syringae (strain B728a).